A 266-amino-acid polypeptide reads, in one-letter code: Mitochondrial S-adenosylmethionine carrier protein (266 aa).

Solcar repeat units lie at residues 4–77 (RELC…AKRF), 85–167 (LSPI…LKNL), and 176–264 (VDCW…VRSS). The next 6 helical transmembrane spans lie at 5–25 (ELCA…LILF), 49–69 (IYAG…AFFV), 84–104 (YLSP…ACLI), 141–161 (RGYK…FPLW), 181–201 (SAVC…PLDV), and 237–257 (FAGV…FLGA).

It belongs to the mitochondrial carrier (TC 2.A.29) family.

The protein resides in the mitochondrion inner membrane. The catalysed reaction is S-adenosyl-L-homocysteine(out) + S-adenosyl-L-methionine(in) = S-adenosyl-L-homocysteine(in) + S-adenosyl-L-methionine(out). Its function is as follows. Mitochondrial S-adenosyl-L-methionine/S-adenosyl-L-homocysteine antiporter. Mediates the exchange of cytosolic S-adenosyl-L-methionine, the predominant methyl-group donor for macromolecule methylation processes, for mitochondrial S-adenosylhomocysteine(SAH), a by-product of methylation reactions. This chain is Mitochondrial S-adenosylmethionine carrier protein (slc25a26), found in Xenopus laevis (African clawed frog).